Here is a 303-residue protein sequence, read N- to C-terminus: Eukaryotic translation initiation factor 3 subunit G (303 aa).

Residues 1 to 38 (MATQTKHDWADDEDLEETTTTTAPTTDLPPPQKIQNKD) form a disordered region. The RRM domain maps to 223–301 (ATLRVTNVSE…LILRVEFAKK (79 aa)).

This sequence belongs to the eIF-3 subunit G family. In terms of assembly, component of the eukaryotic translation initiation factor 3 (eIF-3) complex.

It localises to the cytoplasm. Its function is as follows. RNA-binding component of the eukaryotic translation initiation factor 3 (eIF-3) complex, which is involved in protein synthesis of a specialized repertoire of mRNAs and, together with other initiation factors, stimulates binding of mRNA and methionyl-tRNAi to the 40S ribosome. The eIF-3 complex specifically targets and initiates translation of a subset of mRNAs involved in cell proliferation. This subunit can bind 18S rRNA. This Chaetomium globosum (strain ATCC 6205 / CBS 148.51 / DSM 1962 / NBRC 6347 / NRRL 1970) (Soil fungus) protein is Eukaryotic translation initiation factor 3 subunit G.